A 432-amino-acid chain; its full sequence is Cytochrome c biogenesis protein CcsB (432 aa).

3 helical membrane-spanning segments follow: residues 18-38 (LRLA…GTGI), 76-96 (SGWF…CSWR), and 166-186 (VGPL…AWGA).

Belongs to the Ccs1/CcsB family. May interact with CcsA.

It is found in the cellular thylakoid membrane. Functionally, required during biogenesis of c-type cytochromes (cytochrome c6 and cytochrome f) at the step of heme attachment. The sequence is that of Cytochrome c biogenesis protein CcsB from Synechococcus sp. (strain CC9605).